Here is a 200-residue protein sequence, read N- to C-terminus: Intraflagellar transport protein 43 homolog (200 aa).

Disordered stretches follow at residues 56-76 and 175-200; these read KTGK…IAAP and ERID…SSKY. A compositionally biased stretch (basic and acidic residues) spans 175-192; the sequence is ERIDAKDQPSDSRSRNAR.

Belongs to the IFT43 family. As to quaternary structure, component of the IFT complex A (IFT-A) composed of at least che-11, daf-10, dyf-2, ift-139, ift-43 and ifta-1. In terms of tissue distribution, expressed in ciliated sensory neurons.

It localises to the cell projection. Its subcellular location is the cilium. As a component of IFT complex A (IFT-A), a complex required for retrograde ciliary transport and entry into cilia of G protein-coupled receptors (GPCRs), it is involved in ciliogenesis. In particular, may act redundantly with the intraflagellar transport protein ift-139 to regulate the transport of specific ciliary cargo proteins such as che-3 which are related to motility. The polypeptide is Intraflagellar transport protein 43 homolog (Caenorhabditis elegans).